The following is a 155-amino-acid chain: Alanine- and arginine-rich domain-containing protein (155 aa).

This chain is Alanine- and arginine-rich domain-containing protein (AARD), found in Homo sapiens (Human).